The following is a 180-amino-acid chain: Shikimate kinase (180 aa).

An ATP-binding site is contributed by glycine 14–threonine 19. Residue serine 18 coordinates Mg(2+). Positions 36, 60, and 82 each coordinate substrate. Arginine 120 contributes to the ATP binding site. Arginine 140 lines the substrate pocket. Glutamine 157 lines the ATP pocket.

This sequence belongs to the shikimate kinase family. In terms of assembly, monomer. Mg(2+) is required as a cofactor.

It localises to the cytoplasm. It carries out the reaction shikimate + ATP = 3-phosphoshikimate + ADP + H(+). It participates in metabolic intermediate biosynthesis; chorismate biosynthesis; chorismate from D-erythrose 4-phosphate and phosphoenolpyruvate: step 5/7. Catalyzes the specific phosphorylation of the 3-hydroxyl group of shikimic acid using ATP as a cosubstrate. The protein is Shikimate kinase of Haemophilus influenzae (strain PittGG).